A 707-amino-acid chain; its full sequence is Ornithine decarboxylase (707 aa).

The tract at residues 83–102 (NRNPLSRADSAAGREETAQT) is disordered. K288 bears the N6-(pyridoxal phosphate)lysine mark. Pyridoxal 5'-phosphate-binding positions include S421, G458, and 498-501 (EPGR). 561–562 (FD) contacts substrate. C634 (proton donor; shared with dimeric partner) is an active-site residue. Substrate is bound at residue D635. Y663 lines the pyridoxal 5'-phosphate pocket.

The protein belongs to the Orn/Lys/Arg decarboxylase class-II family. Homodimer. Only the dimer is catalytically active, as the active sites are constructed of residues from both monomers. Pyridoxal 5'-phosphate serves as cofactor.

The enzyme catalyses L-ornithine + H(+) = putrescine + CO2. It participates in amine and polyamine biosynthesis; putrescine biosynthesis via L-ornithine pathway; putrescine from L-ornithine: step 1/1. Inhibited by antizyme (AZ) in response to polyamine levels. AZ inhibits the assembly of the functional homodimer by binding to ODC monomers and targeting them for ubiquitin-independent proteolytic destruction by the 26S proteasome. Inhibited by 1-amino-oxy-3-aminopropane (APA, an isosteric analog of putrescine). Irreversibly inhibited by alpha-difluoromethylornithine (DFMO, a curative agent of West African sleeping sickness). Functionally, catalyzes the first and rate-limiting step of polyamine biosynthesis that converts ornithine into putrescine, which is the precursor for the polyamines, spermidine and spermine. Polyamines are essential for cell proliferation and are implicated in cellular processes, ranging from DNA replication to apoptosis. This Leishmania donovani protein is Ornithine decarboxylase.